A 131-amino-acid chain; its full sequence is MRHRHGLRKLNRTSSHRLAMLRNMSNSLFQHELIKTTVPKAKELRKVVEPLITLAKKDTVANRRLAFARLRDRDMVTKLFTELGPRYATRPGGYTRILKFGFRQGDNAPMALVELVDRPEITEAPAEEAAE.

The protein belongs to the bacterial ribosomal protein bL17 family. Part of the 50S ribosomal subunit. Contacts protein L32.

In Cupriavidus necator (strain ATCC 17699 / DSM 428 / KCTC 22496 / NCIMB 10442 / H16 / Stanier 337) (Ralstonia eutropha), this protein is Large ribosomal subunit protein bL17.